Consider the following 266-residue polypeptide: Small ribosomal subunit protein uS3m (266 aa).

It belongs to the universal ribosomal protein uS3 family.

The protein resides in the mitochondrion. The sequence is that of Small ribosomal subunit protein uS3m (MRPS3) from Mycosarcoma maydis (Corn smut fungus).